We begin with the raw amino-acid sequence, 380 residues long: Cytochrome b (380 aa).

Transmembrane regions (helical) follow at residues 33-53, 77-98, 113-133, and 178-198; these read FGSL…FLAM, WLIR…YLHI, WNVG…GYVL, and FFAF…IHLL. The heme b site is built by His83 and His97. Residues His182 and His196 each coordinate heme b. His201 serves as a coordination point for a ubiquinone. A run of 4 helical transmembrane segments spans residues 226–246, 288–308, 320–340, and 347–367; these read YKDL…ALFS, LGGV…PILH, ITQF…WIGG, and FIII…VLTP.

It belongs to the cytochrome b family. As to quaternary structure, the cytochrome bc1 complex contains 3 respiratory subunits (MT-CYB, CYC1 and UQCRFS1), 2 core proteins (UQCRC1 and UQCRC2) and probably 6 low-molecular weight proteins. Requires heme b as cofactor.

It localises to the mitochondrion inner membrane. Its function is as follows. Component of the ubiquinol-cytochrome c reductase complex (complex III or cytochrome b-c1 complex) that is part of the mitochondrial respiratory chain. The b-c1 complex mediates electron transfer from ubiquinol to cytochrome c. Contributes to the generation of a proton gradient across the mitochondrial membrane that is then used for ATP synthesis. The chain is Cytochrome b (mt-cyb) from Dactyloptena peterseni (Starry flying gurnard).